A 126-amino-acid polypeptide reads, in one-letter code: Small ribosomal subunit protein uS13 (126 aa).

The disordered stretch occupies residues 96-126; it reads PVRGQRTRTNARTRRGSRRTVAGKKKPAAKK. The segment covering 100 to 126 has biased composition (basic residues); the sequence is QRTRTNARTRRGSRRTVAGKKKPAAKK.

This sequence belongs to the universal ribosomal protein uS13 family. In terms of assembly, part of the 30S ribosomal subunit. Forms a loose heterodimer with protein S19. Forms two bridges to the 50S subunit in the 70S ribosome.

Its function is as follows. Located at the top of the head of the 30S subunit, it contacts several helices of the 16S rRNA. In the 70S ribosome it contacts the 23S rRNA (bridge B1a) and protein L5 of the 50S subunit (bridge B1b), connecting the 2 subunits; these bridges are implicated in subunit movement. Contacts the tRNAs in the A and P-sites. The protein is Small ribosomal subunit protein uS13 of Thermosynechococcus vestitus (strain NIES-2133 / IAM M-273 / BP-1).